Here is a 371-residue protein sequence, read N- to C-terminus: Cytochrome b (371 aa).

Transmembrane regions (helical) follow at residues 25–45, 69–90, 105–125, and 170–190; these read FGSMLLTCLVLQVLTGFFLAV, WMMQNLHAIGASMFFICIYIHI, WMSGITLLITLMATALFGYVL, and FFALHFILPFAIISLSSLHII. Heme b-binding residues include His75 and His89. Residues His174 and His188 each coordinate heme b. His193 is an a ubiquinone binding site. Transmembrane regions (helical) follow at residues 218 to 238, 280 to 300, 312 to 332, and 339 to 358; these read HKDLLLLTLMMMFLFIIVSFF, LGGALALVASIMILFTTPFTH, LSQLMFWTLVSTFITITWAAT, and FIAISQVTSMLYFTFFLSIP.

Belongs to the cytochrome b family. As to quaternary structure, the cytochrome bc1 complex contains 3 respiratory subunits (MT-CYB, CYC1 and UQCRFS1), 2 core proteins (UQCRC1 and UQCRC2) and probably 6 low-molecular weight proteins. Requires heme b as cofactor.

It localises to the mitochondrion inner membrane. Component of the ubiquinol-cytochrome c reductase complex (complex III or cytochrome b-c1 complex) that is part of the mitochondrial respiratory chain. The b-c1 complex mediates electron transfer from ubiquinol to cytochrome c. Contributes to the generation of a proton gradient across the mitochondrial membrane that is then used for ATP synthesis. The polypeptide is Cytochrome b (MT-CYB) (Liasis olivaceus (Olive python)).